The following is a 107-amino-acid chain: Replication initiation control protein YabA (107 aa).

The Zn(2+) site is built by His81, Cys83, Cys97, and Cys100.

The protein belongs to the YabA family. As to quaternary structure, homotetramer. Interacts with both DnaA and DnaN, acting as a bridge between these two proteins. The cofactor is Zn(2+).

It is found in the cytoplasm. The protein resides in the nucleoid. Involved in control of chromosome replication initiation. Inhibits the cooperative binding of DnaA to the oriC region, thus negatively regulating initiation of chromosome replication. Inhibits the ability of DnaA-ATP to form a helix on DNA; does not disassemble preformed DnaA-DNA helices. Decreases the residence time of DnaA on the chromosome at its binding sites (oriC, replication forks and promoter-binding sites). Tethers DnaA to the replication machinery via the DNA polymerase beta sliding clamp subunit (dnaN). Associates with oriC and other DnaA targets on the chromosome in a DnaA-dependent manner. The chain is Replication initiation control protein YabA from Streptococcus equi subsp. zooepidemicus (strain MGCS10565).